The primary structure comprises 249 residues: Triosephosphate isomerase (249 aa).

9–11 (NWK) provides a ligand contact to substrate. Catalysis depends on His94, which acts as the Electrophile. Glu166 (proton acceptor) is an active-site residue. Residues Gly172 and 232–233 (GG) contribute to the substrate site.

The protein belongs to the triosephosphate isomerase family. As to quaternary structure, homodimer.

It is found in the cytoplasm. The catalysed reaction is D-glyceraldehyde 3-phosphate = dihydroxyacetone phosphate. The protein operates within carbohydrate biosynthesis; gluconeogenesis. Its pathway is carbohydrate degradation; glycolysis; D-glyceraldehyde 3-phosphate from glycerone phosphate: step 1/1. Its function is as follows. Involved in the gluconeogenesis. Catalyzes stereospecifically the conversion of dihydroxyacetone phosphate (DHAP) to D-glyceraldehyde-3-phosphate (G3P). In Xylella fastidiosa (strain M23), this protein is Triosephosphate isomerase.